A 459-amino-acid polypeptide reads, in one-letter code: Protein king tubby (459 aa).

The interval 114–205 (HELEDEESSP…SNGAGGESEG (92 aa)) is disordered. Residues 123–155 (PVTVIEQQQTAPHSANSTHSQRPSTTRQPSFND) show a composition bias toward polar residues. Ser-152 bears the Phosphoserine mark.

Belongs to the TUB family.

Its subcellular location is the cytoplasm. The protein resides in the nucleus. It is found in the cell projection. The protein localises to the cilium membrane. It localises to the rhabdomere. The protein is Protein king tubby of Drosophila persimilis (Fruit fly).